A 237-amino-acid chain; its full sequence is Sugar fermentation stimulation protein homolog (237 aa).

The protein belongs to the SfsA family.

This Pseudomonas putida (strain W619) protein is Sugar fermentation stimulation protein homolog.